The sequence spans 291 residues: F-box/kelch-repeat protein At5g38670 (291 aa).

In terms of domain architecture, F-box spans Thr5–Arg51. Kelch repeat units lie at residues Glu46–Glu91, Lys92–Gly140, Leu142–Ile187, and Lys189–Lys232.

This is F-box/kelch-repeat protein At5g38670 from Arabidopsis thaliana (Mouse-ear cress).